A 207-amino-acid chain; its full sequence is Uracil phosphoribosyltransferase (207 aa).

5-phospho-alpha-D-ribose 1-diphosphate-binding positions include arginine 77, arginine 102, and 129–137 (DPMLATGGS). Uracil contacts are provided by residues isoleucine 192 and 197-199 (GDA). Aspartate 198 lines the 5-phospho-alpha-D-ribose 1-diphosphate pocket.

It belongs to the UPRTase family. The cofactor is Mg(2+).

It catalyses the reaction UMP + diphosphate = 5-phospho-alpha-D-ribose 1-diphosphate + uracil. It functions in the pathway pyrimidine metabolism; UMP biosynthesis via salvage pathway; UMP from uracil: step 1/1. With respect to regulation, allosterically activated by GTP. Functionally, catalyzes the conversion of uracil and 5-phospho-alpha-D-ribose 1-diphosphate (PRPP) to UMP and diphosphate. The protein is Uracil phosphoribosyltransferase of Dictyoglomus turgidum (strain DSM 6724 / Z-1310).